The following is a 164-amino-acid chain: ATP synthase subunit b (164 aa).

The chain crosses the membrane as a helical span at residues 6 to 26 (GELVGNFILVTGSVIVLLLLI).

The protein belongs to the ATPase B chain family. F-type ATPases have 2 components, F(1) - the catalytic core - and F(0) - the membrane proton channel. F(1) has five subunits: alpha(3), beta(3), gamma(1), delta(1), epsilon(1). F(0) has three main subunits: a(1), b(2) and c(10-14). The alpha and beta chains form an alternating ring which encloses part of the gamma chain. F(1) is attached to F(0) by a central stalk formed by the gamma and epsilon chains, while a peripheral stalk is formed by the delta and b chains.

It is found in the cell membrane. Functionally, f(1)F(0) ATP synthase produces ATP from ADP in the presence of a proton or sodium gradient. F-type ATPases consist of two structural domains, F(1) containing the extramembraneous catalytic core and F(0) containing the membrane proton channel, linked together by a central stalk and a peripheral stalk. During catalysis, ATP synthesis in the catalytic domain of F(1) is coupled via a rotary mechanism of the central stalk subunits to proton translocation. In terms of biological role, component of the F(0) channel, it forms part of the peripheral stalk, linking F(1) to F(0). This is ATP synthase subunit b from Streptococcus pyogenes serotype M12 (strain MGAS2096).